Here is a 304-residue protein sequence, read N- to C-terminus: 4-diphosphocytidyl-2-C-methyl-D-erythritol kinase (304 aa).

Lys-23 is a catalytic residue. 111–121 contacts ATP; the sequence is PIGGGLGGGSS. The active site involves Asp-153.

It belongs to the GHMP kinase family. IspE subfamily. As to quaternary structure, homodimer.

The catalysed reaction is 4-CDP-2-C-methyl-D-erythritol + ATP = 4-CDP-2-C-methyl-D-erythritol 2-phosphate + ADP + H(+). It functions in the pathway isoprenoid biosynthesis; isopentenyl diphosphate biosynthesis via DXP pathway; isopentenyl diphosphate from 1-deoxy-D-xylulose 5-phosphate: step 3/6. In terms of biological role, catalyzes the phosphorylation of the position 2 hydroxy group of 4-diphosphocytidyl-2C-methyl-D-erythritol. In Wigglesworthia glossinidia brevipalpis, this protein is 4-diphosphocytidyl-2-C-methyl-D-erythritol kinase.